The chain runs to 1463 residues: Probable ATP-dependent RNA helicase spindle-E (1463 aa).

The 166-residue stretch at 131–296 (LKAIRENPVV…FKIPGPNSLF (166 aa)) folds into the Helicase ATP-binding domain. 144–151 (GMTGCGKT) lines the ATP pocket. Positions 243–246 (DEVH) match the DEAH box motif. Residues 348–531 (VCDRFIDEFE…NVVLKTKLLD (184 aa)) enclose the Helicase C-terminal domain. A Tudor domain is found at 951-1016 (AFKQRDIVAA…QLRGTPLDMF (66 aa)).

It belongs to the DEAD box helicase family. DEAH subfamily.

The protein localises to the cytoplasm. It catalyses the reaction ATP + H2O = ADP + phosphate + H(+). Its function is as follows. Probable ATP-binding RNA helicase which plays a central role during gametogenesis by repressing transposable elements and preventing their mobilization, which is essential for the germline integrity. Acts via the piRNA metabolic process, which mediates the repression of transposable elements during meiosis by forming complexes composed of piRNAs and Piwi proteins and govern the methylation and subsequent repression of transposons. This is Probable ATP-dependent RNA helicase spindle-E (spn-E) from Anopheles gambiae (African malaria mosquito).